Here is a 217-residue protein sequence, read N- to C-terminus: Peroxiredoxin Q, chloroplastic (217 aa).

The transit peptide at 1-65 directs the protein to the chloroplast; that stretch reads MAAICLPVAK…PPPSYSARIS (65 aa). A Thioredoxin domain is found at 70-217; that stretch reads VSKGSVPPQF…DETLKFLQSA (148 aa). C112 acts as the Cysteine sulfenic acid (-SOH) intermediate in catalysis. C112 and C117 are disulfide-bonded.

The protein belongs to the peroxiredoxin family. BCP/PrxQ subfamily. As to quaternary structure, monomer. As to expression, expressed in the leaves, roots and stems.

It localises to the plastid. The protein resides in the chloroplast thylakoid lumen. It carries out the reaction a hydroperoxide + [thioredoxin]-dithiol = an alcohol + [thioredoxin]-disulfide + H2O. Its function is as follows. Thiol-specific peroxidase that catalyzes the reduction of hydrogen peroxide and organic hydroperoxides to water and alcohols, respectively. Plays a role in cell protection against oxidative stress by detoxifying peroxides. Involved in both resistance against fungal disease and oxidative stress. The sequence is that of Peroxiredoxin Q, chloroplastic (AFP1) from Gentiana triflora (Clustered gentian).